Consider the following 250-residue polypeptide: Pyrroloquinoline-quinone synthase (250 aa).

It belongs to the PqqC family.

The catalysed reaction is 6-(2-amino-2-carboxyethyl)-7,8-dioxo-1,2,3,4,7,8-hexahydroquinoline-2,4-dicarboxylate + 3 O2 = pyrroloquinoline quinone + 2 H2O2 + 2 H2O + H(+). The protein operates within cofactor biosynthesis; pyrroloquinoline quinone biosynthesis. Functionally, ring cyclization and eight-electron oxidation of 3a-(2-amino-2-carboxyethyl)-4,5-dioxo-4,5,6,7,8,9-hexahydroquinoline-7,9-dicarboxylic-acid to PQQ. This is Pyrroloquinoline-quinone synthase from Xanthomonas euvesicatoria pv. vesicatoria (strain 85-10) (Xanthomonas campestris pv. vesicatoria).